Reading from the N-terminus, the 360-residue chain is Phospho-N-acetylmuramoyl-pentapeptide-transferase (360 aa).

10 helical membrane passes run 21 to 41, 73 to 93, 98 to 118, 132 to 152, 168 to 188, 199 to 219, 236 to 256, 263 to 283, 288 to 308, and 338 to 358; these read YITF…LWIG, TMGG…WADL, VWFV…DDYW, WKYF…YAVG, FMPQ…VGTS, GLAI…AWAT, AGEL…FLWY, VFMG…IAVL, LLLV…ILQV, and VIVR…VTLK.

It belongs to the glycosyltransferase 4 family. MraY subfamily. Requires Mg(2+) as cofactor.

The protein localises to the cell inner membrane. It catalyses the reaction UDP-N-acetyl-alpha-D-muramoyl-L-alanyl-gamma-D-glutamyl-meso-2,6-diaminopimeloyl-D-alanyl-D-alanine + di-trans,octa-cis-undecaprenyl phosphate = di-trans,octa-cis-undecaprenyl diphospho-N-acetyl-alpha-D-muramoyl-L-alanyl-D-glutamyl-meso-2,6-diaminopimeloyl-D-alanyl-D-alanine + UMP. The protein operates within cell wall biogenesis; peptidoglycan biosynthesis. Functionally, catalyzes the initial step of the lipid cycle reactions in the biosynthesis of the cell wall peptidoglycan: transfers peptidoglycan precursor phospho-MurNAc-pentapeptide from UDP-MurNAc-pentapeptide onto the lipid carrier undecaprenyl phosphate, yielding undecaprenyl-pyrophosphoryl-MurNAc-pentapeptide, known as lipid I. The chain is Phospho-N-acetylmuramoyl-pentapeptide-transferase from Actinobacillus pleuropneumoniae serotype 3 (strain JL03).